Consider the following 260-residue polypeptide: MSYTPLPNINDFPTLGNPLEDAKRAAAYRAVDENLNFDEHRIIGVGSGSTVVYVAERIGQYLKDEKYHDKVSKFICIPTGYQSRNLIQDNGLILGSIEQHPHVDIAFDGADEVDHNLQLIKGGGACLFQEKLVSTSAKIFIVVADSRKKSDTNLGINWKRGVPIEIVPSAWSRVQHDLTSILHANSAPVRQGGSAKAGPVVTDNMNFLIDADFGEIQDPKALHEQIKMLVGVVETGLFIDNAHRAYFGKPDGSVEVIDKK.

This sequence belongs to the ribose 5-phosphate isomerase family.

Its subcellular location is the cytoplasm. It carries out the reaction aldehydo-D-ribose 5-phosphate = D-ribulose 5-phosphate. Its pathway is carbohydrate degradation; pentose phosphate pathway; D-ribose 5-phosphate from D-ribulose 5-phosphate (non-oxidative stage): step 1/1. This is Ribose-5-phosphate isomerase (RKI1) from Candida glabrata (strain ATCC 2001 / BCRC 20586 / JCM 3761 / NBRC 0622 / NRRL Y-65 / CBS 138) (Yeast).